The chain runs to 399 residues: Succinate--CoA ligase [ADP-forming] subunit beta (399 aa).

The ATP-grasp domain maps to 9 to 254 (KELLAKYGIG…ETEEDPAEVE (246 aa)). ATP is bound by residues Lys-46, 53-55 (GRG), Val-112, and Glu-117. Residues Asn-209 and Asp-223 each contribute to the Mg(2+) site. Substrate is bound by residues Asn-274 and 331–333 (GIM).

Belongs to the succinate/malate CoA ligase beta subunit family. In terms of assembly, heterotetramer of two alpha and two beta subunits. Mg(2+) is required as a cofactor.

The catalysed reaction is succinate + ATP + CoA = succinyl-CoA + ADP + phosphate. It catalyses the reaction GTP + succinate + CoA = succinyl-CoA + GDP + phosphate. Its pathway is carbohydrate metabolism; tricarboxylic acid cycle; succinate from succinyl-CoA (ligase route): step 1/1. Its function is as follows. Succinyl-CoA synthetase functions in the citric acid cycle (TCA), coupling the hydrolysis of succinyl-CoA to the synthesis of either ATP or GTP and thus represents the only step of substrate-level phosphorylation in the TCA. The beta subunit provides nucleotide specificity of the enzyme and binds the substrate succinate, while the binding sites for coenzyme A and phosphate are found in the alpha subunit. The sequence is that of Succinate--CoA ligase [ADP-forming] subunit beta from Erythrobacter litoralis (strain HTCC2594).